Here is a 248-residue protein sequence, read N- to C-terminus: Something about silencing protein 5 (248 aa).

The 139-residue stretch at 1 to 139 folds into the YEATS domain; it reads MDHSIEVTFR…SELSKYFDLP (139 aa). Ser144 carries the post-translational modification Phosphoserine. Residues 223–248 are disordered; it reads TKQERTNFGSDAIHKDEPVKAHNKLK.

Component of the SAS complex, at least composed of SAS2, SAS4 and SAS5. These three proteins constitute the core of the complex, and are sufficient to acetylate histones.

The protein localises to the nucleus. Component of the SAS complex, a multiprotein complex that acetylates 'Lys-16' of histone H4 and 'Lys-14' of histone H3. The SAS complex is however unable to acetylate nucleosomal histones. The complex is involved in transcriptional silencing at telomeres and at HML locus. Also involved in rDNA silencing. In the complex, SAS5 is required for maximal histone acetyltransferase (HAT) activity of the complex, suggesting that it may be required to stabilize the complex or help in substrate recognition. The protein is Something about silencing protein 5 (SAS5) of Saccharomyces cerevisiae (strain ATCC 204508 / S288c) (Baker's yeast).